The following is a 327-amino-acid chain: Beta-ketoacyl-[acyl-carrier-protein] synthase III 2 (327 aa).

Active-site residues include cysteine 114 and histidine 251. The ACP-binding stretch occupies residues 252–256; sequence SANLR. Asparagine 281 is a catalytic residue.

The protein belongs to the thiolase-like superfamily. FabH family. In terms of assembly, homodimer.

It is found in the cytoplasm. The catalysed reaction is malonyl-[ACP] + acetyl-CoA + H(+) = 3-oxobutanoyl-[ACP] + CO2 + CoA. The protein operates within lipid metabolism; fatty acid biosynthesis. In terms of biological role, catalyzes the condensation reaction of fatty acid synthesis by the addition to an acyl acceptor of two carbons from malonyl-ACP. Catalyzes the first condensation reaction which initiates fatty acid synthesis and may therefore play a role in governing the total rate of fatty acid production. Possesses both acetoacetyl-ACP synthase and acetyl transacylase activities. Its substrate specificity determines the biosynthesis of branched-chain and/or straight-chain of fatty acids. In Bacillus anthracis, this protein is Beta-ketoacyl-[acyl-carrier-protein] synthase III 2.